The sequence spans 1512 residues: Sterol 3-beta-glucosyltransferase (1512 aa).

Disordered regions lie at residues 22 to 50 (FSGS…YHSL) and 150 to 222 (DEHT…DTDV). Residues 156-169 (SEEEDSADKEEESI) are compositionally biased toward acidic residues. The segment covering 190-222 (TTATLITTQITRTKTATTATPTPTPTSSVDTDV) has biased composition (low complexity). Residues 296 to 331 (LQRVFDLSDEDTFCGNYSAWLIKDVLLQGHVYLTKD) enclose the GRAM 1 domain. A PH domain is found at 359–520 (SIVYSGNLGL…WCNNITKLIF (162 aa)). Residues 816 to 880 (RNFQSHFSTN…TDIEEVRASR (65 aa)) enclose the GRAM 2 domain. The UDP-alpha-D-glucose site is built by Ser-1024, Arg-1025, Asp-1027, Asn-1299, Ile-1328, His-1330, His-1343, Ser-1346, Gly-1347, Thr-1348, Asp-1367, and Gln-1368. The disordered stretch occupies residues 1450–1512 (YKRHHPVPSG…NNSPSQNSSN (63 aa)). The span at 1467-1493 (TDSDDYDDDEDDDESDKDDEEEEEENS) shows a compositional bias: acidic residues. Over residues 1501–1512 (GVNNSPSQNSSN) the composition is skewed to polar residues.

The protein belongs to the glycosyltransferase 28 family.

The protein localises to the cytoplasm. Its subcellular location is the membrane. It carries out the reaction a sterol + UDP-alpha-D-glucose = a sterol 3-beta-D-glucoside + UDP + H(+). It catalyses the reaction ergosterol + UDP-alpha-D-glucose = ergosteryl 3-beta-D-glucoside + UDP + H(+). Its function is as follows. Sterol glycosyltransferase responsible for the glycosylation of ergosterol to form ergosterol-glucoside. The polypeptide is Sterol 3-beta-glucosyltransferase (Candida albicans (strain SC5314 / ATCC MYA-2876) (Yeast)).